The chain runs to 131 residues: Peptide methionine sulfoxide reductase MsrB (131 aa).

The MsrB domain occupies L8–R130. Zn(2+) is bound by residues C47, C50, C96, and C99. The active-site Nucleophile is the C119.

The protein belongs to the MsrB Met sulfoxide reductase family. Zn(2+) serves as cofactor.

The catalysed reaction is L-methionyl-[protein] + [thioredoxin]-disulfide + H2O = L-methionyl-(R)-S-oxide-[protein] + [thioredoxin]-dithiol. In Ectopseudomonas mendocina (strain ymp) (Pseudomonas mendocina), this protein is Peptide methionine sulfoxide reductase MsrB.